The primary structure comprises 641 residues: Mannosyl-oligosaccharide 1,2-alpha-mannosidase IB (641 aa).

Thr2 carries the N-acetylthreonine modification. Over 2-36 (TTPALLPLSGRRIPPLNLGPPSFPHHRATLRLSEK) the chain is Cytoplasmic. Residues 37–57 (FILLLILSAFITLCFGAFFFL) traverse the membrane as a helical; Signal-anchor for type II membrane protein segment. Residues 58-641 (PDSSKHKRFD…STLSGNPAVR (584 aa)) are Lumenal-facing. Cys462 and Cys494 form a disulfide bridge. Glu508 (proton donor) is an active-site residue. Thr619 contacts Ca(2+). N-linked (GlcNAc...) asparagine glycosylation occurs at Asn631.

It belongs to the glycosyl hydrolase 47 family. It depends on Ca(2+) as a cofactor.

It localises to the golgi apparatus membrane. It catalyses the reaction N(4)-(alpha-D-Man-(1-&gt;2)-alpha-D-Man-(1-&gt;2)-alpha-D-Man-(1-&gt;3)-[alpha-D-Man-(1-&gt;2)-alpha-D-Man-(1-&gt;3)-[alpha-D-Man-(1-&gt;2)-alpha-D-Man-(1-&gt;6)]-alpha-D-Man-(1-&gt;6)]-beta-D-Man-(1-&gt;4)-beta-D-GlcNAc-(1-&gt;4)-beta-D-GlcNAc)-L-asparaginyl-[protein] (N-glucan mannose isomer 9A1,2,3B1,2,3) + 4 H2O = N(4)-(alpha-D-Man-(1-&gt;3)-[alpha-D-Man-(1-&gt;3)-[alpha-D-Man-(1-&gt;6)]-alpha-D-Man-(1-&gt;6)]-beta-D-Man-(1-&gt;4)-beta-D-GlcNAc-(1-&gt;4)-beta-D-GlcNAc)-L-asparaginyl-[protein] (N-glucan mannose isomer 5A1,2) + 4 beta-D-mannose. The catalysed reaction is N(4)-(alpha-D-Man-(1-&gt;2)-alpha-D-Man-(1-&gt;2)-alpha-D-Man-(1-&gt;3)-[alpha-D-Man-(1-&gt;3)-[alpha-D-Man-(1-&gt;2)-alpha-D-Man-(1-&gt;6)]-alpha-D-Man-(1-&gt;6)]-beta-D-Man-(1-&gt;4)-beta-D-GlcNAc-(1-&gt;4)-beta-D-GlcNAc)-L-asparaginyl-[protein] (N-glucan mannose isomer 8A1,2,3B1,3) + 3 H2O = N(4)-(alpha-D-Man-(1-&gt;3)-[alpha-D-Man-(1-&gt;3)-[alpha-D-Man-(1-&gt;6)]-alpha-D-Man-(1-&gt;6)]-beta-D-Man-(1-&gt;4)-beta-D-GlcNAc-(1-&gt;4)-beta-D-GlcNAc)-L-asparaginyl-[protein] (N-glucan mannose isomer 5A1,2) + 3 beta-D-mannose. The protein operates within protein modification; protein glycosylation. With respect to regulation, inhibited by both 1-deoxymannojirimycin and kifunensine. Functionally, involved in the maturation of Asn-linked oligosaccharides. Progressively trim alpha-1,2-linked mannose residues from Man(9)GlcNAc(2) to produce Man(5)GlcNAc(2). This Mus musculus (Mouse) protein is Mannosyl-oligosaccharide 1,2-alpha-mannosidase IB (Man1a2).